Consider the following 130-residue polypeptide: Ribosome-binding factor A (130 aa).

The protein belongs to the RbfA family. In terms of assembly, monomer. Binds 30S ribosomal subunits, but not 50S ribosomal subunits or 70S ribosomes.

It localises to the cytoplasm. Its function is as follows. One of several proteins that assist in the late maturation steps of the functional core of the 30S ribosomal subunit. Associates with free 30S ribosomal subunits (but not with 30S subunits that are part of 70S ribosomes or polysomes). Required for efficient processing of 16S rRNA. May interact with the 5'-terminal helix region of 16S rRNA. The polypeptide is Ribosome-binding factor A (Alkalilimnicola ehrlichii (strain ATCC BAA-1101 / DSM 17681 / MLHE-1)).